We begin with the raw amino-acid sequence, 388 residues long: Lipid-A-disaccharide synthase (388 aa).

The protein belongs to the LpxB family.

The catalysed reaction is a lipid X + a UDP-2-N,3-O-bis[(3R)-3-hydroxyacyl]-alpha-D-glucosamine = a lipid A disaccharide + UDP + H(+). Its pathway is bacterial outer membrane biogenesis; LPS lipid A biosynthesis. Functionally, condensation of UDP-2,3-diacylglucosamine and 2,3-diacylglucosamine-1-phosphate to form lipid A disaccharide, a precursor of lipid A, a phosphorylated glycolipid that anchors the lipopolysaccharide to the outer membrane of the cell. This Burkholderia pseudomallei (strain K96243) protein is Lipid-A-disaccharide synthase.